Reading from the N-terminus, the 304-residue chain is MKRAHPEYSSSDSELDETIEVEKESADENGNLSSALGSMSPTTSSQILARKRRRGIIEKRRRDRINNSLSELRRLVPSAFEKQGSAKLEKAEILQMTVDHLKMLHTAGGKGYFDAHALAMDYRSLGFRECLAEVARYLSIIEGLDASDPLRVRLVSHLNNYASQREAASGAHAGLGHIPWGTVFGHHPHIAHPLLLPQNGHGNAGTTASPTEPHHQGRLGSAHPEAPALRAPPSGSLGPVLPVVTSASKLSPPLLSSVASLSAFPFSFGSFHLLSPNALSPSAPTQAANLGKPYRPWGTEIGAF.

The disordered stretch occupies residues 1 to 52 (MKRAHPEYSSSDSELDETIEVEKESADENGNLSSALGSMSPTTSSQILARKR). Over residues 28 to 47 (ENGNLSSALGSMSPTTSSQI) the composition is skewed to polar residues. The transcriptional repression and interaction with NCOR1 and SIN3A stretch occupies residues 48-117 (LARKRRRGII…GGKGYFDAHA (70 aa)). The bHLH domain occupies 49–104 (ARKRRRGIIEKRRRDRINNSLSELRRLVPSAFEKQGSAKLEKAEILQMTVDHLKML). The Orange domain maps to 122-158 (YRSLGFRECLAEVARYLSIIEGLDASDPLRVRLVSHL). The disordered stretch occupies residues 196–234 (LPQNGHGNAGTTASPTEPHHQGRLGSAHPEAPALRAPPS). The span at 200-210 (GHGNAGTTASP) shows a compositional bias: polar residues. A YRPW motif motif is present at residues 294 to 297 (YRPW).

This sequence belongs to the HEY family. As to quaternary structure, self-associates. Interacts with HES1 and HEYL. Interacts with HDAC1, NCOR1 and SIN3A. Interacts with GATA4 and GATA6. Interacts with CCDC89/BOIP. Expressed in the somitic mesoderm, the central nervous system, the kidney, the heart, nasal epithelium, and limbs.

The protein localises to the nucleus. Its function is as follows. Transcriptional repressor which binds preferentially to the canonical E box sequence 5'-CACGTG-3'. Downstream effector of Notch signaling required for cardiovascular development. Specifically required for the Notch-induced endocardial epithelial to mesenchymal transition, which is itself criticial for cardiac valve and septum development. May be required in conjunction with HEY2 to specify arterial cell fate or identity. Promotes maintenance of neuronal precursor cells and glial versus neuronal fate specification. Represses transcription by the cardiac transcriptional activators GATA4 and GATA6 and by the neuronal bHLH factors ASCL1/MASH1 and NEUROD4/MATH3. Involved in the regulation of liver cancer cells self-renewal. In Homo sapiens (Human), this protein is Hairy/enhancer-of-split related with YRPW motif protein 1 (HEY1).